Here is a 199-residue protein sequence, read N- to C-terminus: Superoxide dismutase [Mn/Fe] (199 aa).

Histidine 27, histidine 81, aspartate 161, and histidine 165 together coordinate Fe(3+). 4 residues coordinate Mn(2+): histidine 27, histidine 81, aspartate 161, and histidine 165.

The protein belongs to the iron/manganese superoxide dismutase family. Homodimer. The cofactor is Mn(2+). Fe(3+) is required as a cofactor.

It carries out the reaction 2 superoxide + 2 H(+) = H2O2 + O2. Functionally, destroys superoxide anion radicals which are normally produced within the cells and which are toxic to biological systems. Catalyzes the dismutation of superoxide anion radicals into O2 and H2O2 by successive reduction and oxidation of the transition metal ion at the active site. Also contributes to the inhibition of lipid oxidation. Manganese-preferring enzyme, less active with iron than with manganese. This chain is Superoxide dismutase [Mn/Fe] (sodA), found in Staphylococcus xylosus.